A 922-amino-acid polypeptide reads, in one-letter code: ATP-dependent helicase fft3 (922 aa).

Disordered regions lie at residues 139-177 and 198-224; these read EPKMPSYMDDEEASDSLPLSLSSQSLSSQVTNQKPAPHR and PLSSRKTYEPEADDDSNDDMYSDDDSN. The span at 153–166 shows a compositional bias: low complexity; the sequence is DSLPLSLSSQSLSS. A compositionally biased stretch (acidic residues) spans 207–223; sequence PEADDDSNDDMYSDDDS. Residues Ser213 and Ser219 each carry the phosphoserine modification. In terms of domain architecture, Helicase ATP-binding spans 399-567; sequence YLLYELKLAG…ISLLAFILPH (169 aa). 412–419 contacts ATP; that stretch reads DEMGLGKT. The short motif at 518–521 is the DEGH box element; sequence DEGH. A Phosphoserine modification is found at Ser617. Residues 765 to 922 enclose the Helicase C-terminal domain; it reads KLKKLLTNAV…ETVEAEDDDD (158 aa).

The protein belongs to the SNF2/RAD54 helicase family. In terms of assembly, interacts with the GDP-bound form of spi1.

The protein resides in the nucleus. The protein localises to the chromosome. It catalyses the reaction ATP + H2O = ADP + phosphate + H(+). Functionally, DNA helicase that possesses intrinsic ATP-dependent nucleosome-remodeling activity and is required for heterochromatin organization. Required for maintaining a heterochromatin chromatin structure at centromeres and subtelomeres by protecting these regions from euchromatin assembly. Enhances the nucleotide exchange activity of the pim1 guanine nucleotide exchange factor and abolishes histone-H3-mediated RanGAP inhibition. Involved in the construction of the centromeres. This is ATP-dependent helicase fft3 (fft3) from Schizosaccharomyces pombe (strain 972 / ATCC 24843) (Fission yeast).